We begin with the raw amino-acid sequence, 492 residues long: Bifunctional protein GlmU (492 aa).

The pyrophosphorylase stretch occupies residues 1 to 241; sequence MTFRGDTAVL…NALVAGVNNR (241 aa). UDP-N-acetyl-alpha-D-glucosamine-binding positions include 12–15, Lys26, Gln83, 88–89, 112–114, Gly151, Glu166, Asn181, and Asn239; these read LAAG, GT, and SGD. Asp114 contacts Mg(2+). Residue Asn239 coordinates Mg(2+). Positions 242–262 are linker; it reads VQLAELSAELNRRIVATHQVA. The N-acetyltransferase stretch occupies residues 263–492; that stretch reads GVTIIDPATT…KQSQQKSEPD (230 aa). UDP-N-acetyl-alpha-D-glucosamine-binding residues include Arg344 and Lys362. The active-site Proton acceptor is the His374. UDP-N-acetyl-alpha-D-glucosamine contacts are provided by Tyr377 and Asn388. Acetyl-CoA is bound by residues Ala391, 397-398, Ser416, and Ala434; that span reads NY. The interval 461 to 492 is disordered; that stretch reads VQRKRPGSAAAQAAEKASTRTGKQSQQKSEPD. Residues 479–492 are compositionally biased toward polar residues; it reads TRTGKQSQQKSEPD.

It in the N-terminal section; belongs to the N-acetylglucosamine-1-phosphate uridyltransferase family. This sequence in the C-terminal section; belongs to the transferase hexapeptide repeat family. Homotrimer. Requires Mg(2+) as cofactor.

It localises to the cytoplasm. The enzyme catalyses alpha-D-glucosamine 1-phosphate + acetyl-CoA = N-acetyl-alpha-D-glucosamine 1-phosphate + CoA + H(+). It catalyses the reaction N-acetyl-alpha-D-glucosamine 1-phosphate + UTP + H(+) = UDP-N-acetyl-alpha-D-glucosamine + diphosphate. The protein operates within nucleotide-sugar biosynthesis; UDP-N-acetyl-alpha-D-glucosamine biosynthesis; N-acetyl-alpha-D-glucosamine 1-phosphate from alpha-D-glucosamine 6-phosphate (route II): step 2/2. Its pathway is nucleotide-sugar biosynthesis; UDP-N-acetyl-alpha-D-glucosamine biosynthesis; UDP-N-acetyl-alpha-D-glucosamine from N-acetyl-alpha-D-glucosamine 1-phosphate: step 1/1. It functions in the pathway bacterial outer membrane biogenesis; LPS lipid A biosynthesis. Catalyzes the last two sequential reactions in the de novo biosynthetic pathway for UDP-N-acetylglucosamine (UDP-GlcNAc). The C-terminal domain catalyzes the transfer of acetyl group from acetyl coenzyme A to glucosamine-1-phosphate (GlcN-1-P) to produce N-acetylglucosamine-1-phosphate (GlcNAc-1-P), which is converted into UDP-GlcNAc by the transfer of uridine 5-monophosphate (from uridine 5-triphosphate), a reaction catalyzed by the N-terminal domain. In Mycobacterium leprae (strain Br4923), this protein is Bifunctional protein GlmU.